We begin with the raw amino-acid sequence, 241 residues long: Translation initiation factor IF-3 (241 aa).

The disordered stretch occupies residues 178-241 (KKTEAMAEAR…EAPAEASTEA (64 aa)). Basic and acidic residues predominate over residues 180 to 197 (TEAMAEAREAQAARKAEA). Residues 208–229 (ADEDIPEGELPEGEVPEAETTE) are compositionally biased toward acidic residues. Residues 230–241 (AAEAPAEASTEA) show a composition bias toward low complexity.

Belongs to the IF-3 family. In terms of assembly, monomer.

It is found in the cytoplasm. Functionally, IF-3 binds to the 30S ribosomal subunit and shifts the equilibrium between 70S ribosomes and their 50S and 30S subunits in favor of the free subunits, thus enhancing the availability of 30S subunits on which protein synthesis initiation begins. The sequence is that of Translation initiation factor IF-3 from Streptomyces avermitilis (strain ATCC 31267 / DSM 46492 / JCM 5070 / NBRC 14893 / NCIMB 12804 / NRRL 8165 / MA-4680).